The chain runs to 178 residues: Large ribosomal subunit protein uL6 (178 aa).

Belongs to the universal ribosomal protein uL6 family. Part of the 50S ribosomal subunit.

Functionally, this protein binds to the 23S rRNA, and is important in its secondary structure. It is located near the subunit interface in the base of the L7/L12 stalk, and near the tRNA binding site of the peptidyltransferase center. This chain is Large ribosomal subunit protein uL6, found in Streptococcus sanguinis (strain SK36).